A 160-amino-acid chain; its full sequence is Endoribonuclease YbeY (160 aa).

Residues His125, His129, and His135 each coordinate Zn(2+).

It belongs to the endoribonuclease YbeY family. It depends on Zn(2+) as a cofactor.

The protein resides in the cytoplasm. Its function is as follows. Single strand-specific metallo-endoribonuclease involved in late-stage 70S ribosome quality control and in maturation of the 3' terminus of the 16S rRNA. This is Endoribonuclease YbeY from Dehalococcoides mccartyi (strain ATCC BAA-2100 / JCM 16839 / KCTC 5957 / BAV1).